We begin with the raw amino-acid sequence, 240 residues long: Small ribosomal subunit protein uS3m (240 aa).

Belongs to the universal ribosomal protein uS3 family.

It localises to the mitochondrion. The polypeptide is Small ribosomal subunit protein uS3m (RPS3) (Chondrus crispus (Carrageen Irish moss)).